Consider the following 325-residue polypeptide: Aldo-keto reductase family 1 member A1 (325 aa).

Ala2 is subject to N-acetylalanine. Residue Ser4 is modified to Phosphoserine. NADP(+) is bound by residues 11 to 20 (GQKMPLIGLG), Thr21, and Trp22. Phosphoserine is present on Ser38. Asp45 lines the NADP(+) pocket. Tyr50 functions as the Proton donor in the catalytic mechanism. Residue Lys127 is modified to N6-acetyllysine; alternate. N6-succinyllysine; alternate is present on Lys127. Lys145 bears the N6-succinyllysine mark. Residues Ser162, Asn163, Ser211, Leu213, Ser215, Ser216, Lys263, Ser264, Ile265, Thr266, Arg269, Gln272, and Asn273 each coordinate NADP(+). Phosphoserine is present on Ser211.

This sequence belongs to the aldo/keto reductase family.

It localises to the cytoplasm. The protein localises to the cytosol. Its subcellular location is the apical cell membrane. The enzyme catalyses a primary alcohol + NADP(+) = an aldehyde + NADPH + H(+). It catalyses the reaction L-gulonate + NADP(+) = aldehydo-D-glucuronate + NADPH + H(+). It carries out the reaction L-gulono-1,4-lactone + NADP(+) = D-glucurono-3,6-lactone + NADPH + H(+). The catalysed reaction is allyl alcohol + NADP(+) = acrolein + NADPH + H(+). The enzyme catalyses glycerol + NADP(+) = D-glyceraldehyde + NADPH + H(+). It catalyses the reaction glycerol + NADP(+) = L-glyceraldehyde + NADPH + H(+). It carries out the reaction hydroxyacetone + NADP(+) = methylglyoxal + NADPH + H(+). The catalysed reaction is 3-deoxyfructose + NADP(+) = 3-deoxyglucosone + NADPH + H(+). The enzyme catalyses (R)-mevalonate + NADP(+) = (R)-mevaldate + NADPH + H(+). It catalyses the reaction pyridine 3-methanol + NADP(+) = pyridine-3-carbaldehyde + NADPH + H(+). It carries out the reaction S-nitroso-CoA + NADPH + H(+) = sulfinamide-CoA + NADP(+). The catalysed reaction is S-nitrosoglutathione + NADPH + H(+) = S-(hydroxysulfenamide)glutathione + NADP(+). Its function is as follows. Catalyzes the NADPH-dependent reduction of a wide variety of carbonyl-containing compounds to their corresponding alcohols. Displays enzymatic activity towards endogenous metabolites such as aromatic and aliphatic aldehydes, ketones, monosaccharides and bile acids, with a preference for negatively charged substrates, such as glucuronate and succinic semialdehyde. Functions as a detoxifiying enzyme by reducing a range of toxic aldehydes. Reduces methylglyoxal and 3-deoxyglucosone, which are present at elevated levels under hyperglycemic conditions and are cytotoxic. Involved also in the detoxification of lipid-derived aldehydes like acrolein. Plays a role in the activation of procarcinogens, such as polycyclic aromatic hydrocarbon trans-dihydrodiols, and in the metabolism of various xenobiotics and drugs. Also acts as an inhibitor of protein S-nitrosylation by mediating degradation of S-nitroso-coenzyme A (S-nitroso-CoA), a cofactor required to S-nitrosylate proteins. S-nitroso-CoA reductase activity is involved in reprogramming intermediary metabolism in renal proximal tubules, notably by inhibiting protein S-nitrosylation of isoform 2 of PKM (PKM2). Also acts as a S-nitroso-glutathione reductase by catalyzing the NADPH-dependent reduction of S-nitrosoglutathione. Displays no reductase activity towards retinoids. The protein is Aldo-keto reductase family 1 member A1 (AKR1A1) of Pongo abelii (Sumatran orangutan).